Consider the following 548-residue polypeptide: Fluconazole resistance protein 1 (548 aa).

The disordered stretch occupies residues 30 to 94 (SAREDETRKP…WNGPSDPENP (65 aa)). Residues 31 to 51 (AREDETRKPENTDKKECKPDY) are compositionally biased toward basic and acidic residues. Residues 60-73 (SCSESSTDSDSSGS) show a composition bias toward low complexity. 12 helical membrane passes run 104-124 (LVVFQIMLLTCVTYMGSSIYT), 139-159 (VVATLNLSLYVLGYGLGPIIF), 179-199 (FFFMIFQVGCATVHNIGGLIV), 203-223 (ISGILCSPSLATGGGTVADII), 230-250 (LVLGMWSAGAVAAPVLAPLLG), 261-281 (FIFWLLMWLSAATFILLAFFF), 347-367 (IAVAYGCFYLFFEAFPIVFVG), 376-396 (VGLAYMGFCVGCVLAYGLFGI), 416-436 (FLIVAMCVCWCLPLSLFLFGW), 440-460 (VHWILPVISEVFFVLAVFNIF), 476-496 (ASVFAGNGFCRASFACAFPLF), and 511-531 (VAWGSSLVGFLTLGLAIIPFI).

This sequence belongs to the major facilitator superfamily.

The protein resides in the membrane. Its function is as follows. Probable efflux transporter. Confers resistance to the azole derivative fluconazole (FCZ). This Saccharomyces cerevisiae (strain ATCC 204508 / S288c) (Baker's yeast) protein is Fluconazole resistance protein 1 (FLR1).